Reading from the N-terminus, the 201-residue chain is Holliday junction branch migration complex subunit RuvA (201 aa).

The interval M1–I64 is domain I. The interval N65–L143 is domain II. Residues S144–S150 are flexible linker. Residues N151–S201 are domain III.

Belongs to the RuvA family. Homotetramer. Forms an RuvA(8)-RuvB(12)-Holliday junction (HJ) complex. HJ DNA is sandwiched between 2 RuvA tetramers; dsDNA enters through RuvA and exits via RuvB. An RuvB hexamer assembles on each DNA strand where it exits the tetramer. Each RuvB hexamer is contacted by two RuvA subunits (via domain III) on 2 adjacent RuvB subunits; this complex drives branch migration. In the full resolvosome a probable DNA-RuvA(4)-RuvB(12)-RuvC(2) complex forms which resolves the HJ.

The protein resides in the cytoplasm. Functionally, the RuvA-RuvB-RuvC complex processes Holliday junction (HJ) DNA during genetic recombination and DNA repair, while the RuvA-RuvB complex plays an important role in the rescue of blocked DNA replication forks via replication fork reversal (RFR). RuvA specifically binds to HJ cruciform DNA, conferring on it an open structure. The RuvB hexamer acts as an ATP-dependent pump, pulling dsDNA into and through the RuvAB complex. HJ branch migration allows RuvC to scan DNA until it finds its consensus sequence, where it cleaves and resolves the cruciform DNA. The polypeptide is Holliday junction branch migration complex subunit RuvA (Staphylococcus haemolyticus (strain JCSC1435)).